The following is a 133-amino-acid chain: Nickel-responsive regulator (133 aa).

Residues histidine 76, histidine 87, histidine 89, and cysteine 95 each coordinate Ni(2+).

It belongs to the transcriptional regulatory CopG/NikR family. As to quaternary structure, homotetramer. Ni(2+) serves as cofactor.

Its function is as follows. Transcriptional repressor of the nikABCDE operon. Is active in the presence of excessive concentrations of intracellular nickel. This is Nickel-responsive regulator from Escherichia coli (strain SE11).